The chain runs to 123 residues: Large ribosomal subunit protein eL8 (123 aa).

Belongs to the eukaryotic ribosomal protein eL8 family. In terms of assembly, may be present in up to 3 copies per 70S ribosome. Part of the 50S ribosomal subunit, where it binds 23S rRNA at its canonical site near the L1 stalk, as well as a possible second 50S binding site near helix 25 and a possible third site on the beak of the 30S subunit. Component of box C/D small ribonucleoprotein (sRNP) particles that contain rpl7ae, FlpA and nop5, plus a guide RNA. These sRNP particles form homodimers, giving rise to an asymmetric holoenzyme. Probably part of the RNase P complex.

The protein resides in the cytoplasm. Functionally, multifunctional RNA-binding protein that recognizes the K-turn motif in ribosomal RNA, the RNA component of RNase P, box H/ACA, box C/D and box C'/D' sRNAs. Component of the 70S ribosome. Component of a box C/D small ribonucleoprotein (sRNP) particle that is involved in pre-rRNA and tRNA processing. Utilizes the methyl donor S-adenosyl-L-methionine to catalyze the site-specific 2'-hydroxyl methylation of ribose moieties in rRNA and tRNA. Site specificity is provided by a guide RNA that base pairs with the substrate. Methylation occurs at a characteristic distance from the sequence involved in base pairing with the guide RNA. In Pyrococcus furiosus (strain ATCC 43587 / DSM 3638 / JCM 8422 / Vc1), this protein is Large ribosomal subunit protein eL8.